A 68-amino-acid polypeptide reads, in one-letter code: Purkinje cell protein 4-like protein 1 (68 aa).

Residues 1–16 (MSELNTKTPPAANQAS) are compositionally biased toward polar residues. Residues 1 to 42 (MSELNTKTPPAANQASDPEEKGKPGSIKKAEEEEEIDIDLTA) are disordered. At Thr-8 the chain carries Phosphothreonine. A compositionally biased stretch (basic and acidic residues) spans 18–31 (PEEKGKPGSIKKAE). The region spanning 45-68 (TEKAALAIQGKFRRFQKRKKDSSS) is the IQ domain.

The protein belongs to the PCP4 family. As to expression, expressed in laminar and nuclear structures of the CNS.

The sequence is that of Purkinje cell protein 4-like protein 1 (Pcp4l1) from Mus musculus (Mouse).